A 78-amino-acid chain; its full sequence is Large ribosomal subunit protein bL28 (78 aa).

The interval M1–H20 is disordered.

The protein belongs to the bacterial ribosomal protein bL28 family.

In Vibrio campbellii (strain ATCC BAA-1116), this protein is Large ribosomal subunit protein bL28.